Consider the following 78-residue polypeptide: Acyl carrier protein (78 aa).

The region spanning 2-77 (SDIASRVKAI…QAISYIEEAK (76 aa)) is the Carrier domain. At S37 the chain carries O-(pantetheine 4'-phosphoryl)serine.

Belongs to the acyl carrier protein (ACP) family. 4'-phosphopantetheine is transferred from CoA to a specific serine of apo-ACP by AcpS. This modification is essential for activity because fatty acids are bound in thioester linkage to the sulfhydryl of the prosthetic group.

It is found in the cytoplasm. Its pathway is lipid metabolism; fatty acid biosynthesis. Functionally, carrier of the growing fatty acid chain in fatty acid biosynthesis. The protein is Acyl carrier protein of Flavobacterium johnsoniae (strain ATCC 17061 / DSM 2064 / JCM 8514 / BCRC 14874 / CCUG 350202 / NBRC 14942 / NCIMB 11054 / UW101) (Cytophaga johnsonae).